Here is a 359-residue protein sequence, read N- to C-terminus: Tricarboxylate transport protein A, mitochondrial (359 aa).

Solcar repeat units lie at residues 71–159, 170–256, and 266–351; these read THPW…LSNP, KASL…LRNW, and MHPL…VVKL. A run of 4 helical transmembrane segments spans residues 77–97, 171–191, 269–289, and 336–356; these read IFAG…TEYV, ASLL…VCPM, LVTA…NTPL, and LDVA…NNVW.

This sequence belongs to the mitochondrial carrier (TC 2.A.29) family. Post-translationally, possesses a short cleavable presequence, which, however, is found to be dispensable both for targeting to mitochondria and insertion into the inner membrane. However, the presequence is required to keep SLC25A1 in a soluble state and thus in an import-competent state. Mature SLC25A1 lacking the presequence is prone to aggregation.

The protein resides in the mitochondrion inner membrane. The enzyme catalyses (S)-malate(in) + citrate(out) = (S)-malate(out) + citrate(in). It carries out the reaction D-threo-isocitrate(in) + citrate(out) = D-threo-isocitrate(out) + citrate(in). It catalyses the reaction citrate(out) + succinate(in) = citrate(in) + succinate(out). The catalysed reaction is cis-aconitate(in) + citrate(out) = cis-aconitate(out) + citrate(in). The enzyme catalyses trans-aconitate(in) + citrate(out) = trans-aconitate(out) + citrate(in). It carries out the reaction phosphoenolpyruvate(in) + citrate(out) = phosphoenolpyruvate(out) + citrate(in). It catalyses the reaction maleate(in) + citrate(out) = maleate(out) + citrate(in). Mitochondrial electroneutral antiporter that exports citrate from the mitochondria into the cytosol in exchange for malate. Also able to mediate the exchange of citrate for isocitrate, phosphoenolpyruvate, cis-aconitate and to a lesser extent trans-aconitate, maleate and succinate. In the cytoplasm, citrate plays important roles in fatty acid and sterol synthesis, regulation of glycolysis, protein acetylation, and other physiopathological processes. The chain is Tricarboxylate transport protein A, mitochondrial from Danio rerio (Zebrafish).